The chain runs to 636 residues: Biosynthetic arginine decarboxylase (636 aa).

Lysine 101 is subject to N6-(pyridoxal phosphate)lysine. 286 to 296 (FDVGGGLAVDY) provides a ligand contact to substrate.

The protein belongs to the Orn/Lys/Arg decarboxylase class-II family. SpeA subfamily. Mg(2+) is required as a cofactor. Pyridoxal 5'-phosphate serves as cofactor.

The catalysed reaction is L-arginine + H(+) = agmatine + CO2. The protein operates within amine and polyamine biosynthesis; agmatine biosynthesis; agmatine from L-arginine: step 1/1. Functionally, catalyzes the biosynthesis of agmatine from arginine. In Shewanella denitrificans (strain OS217 / ATCC BAA-1090 / DSM 15013), this protein is Biosynthetic arginine decarboxylase.